The sequence spans 201 residues: tRNA (guanine-N(7)-)-methyltransferase (201 aa).

Glu-33, Glu-58, Asp-85, and Asp-106 together coordinate S-adenosyl-L-methionine. Asp-106 is an active-site residue. Residues Lys-110, Asp-142, and 180 to 183 (TTYE) each bind substrate.

This sequence belongs to the class I-like SAM-binding methyltransferase superfamily. TrmB family.

The catalysed reaction is guanosine(46) in tRNA + S-adenosyl-L-methionine = N(7)-methylguanosine(46) in tRNA + S-adenosyl-L-homocysteine. The protein operates within tRNA modification; N(7)-methylguanine-tRNA biosynthesis. Functionally, catalyzes the formation of N(7)-methylguanine at position 46 (m7G46) in tRNA. In Mesomycoplasma hyopneumoniae (strain 232) (Mycoplasma hyopneumoniae), this protein is tRNA (guanine-N(7)-)-methyltransferase.